A 36-amino-acid chain; its full sequence is Egg-laying-like hormone (36 aa).

K36 is modified (lysine amide).

As to expression, supra, subesophageal ganglia and segmental ganglia of the ventral nerve cord and brain.

In terms of biological role, may be involved in leech reproduction. This chain is Egg-laying-like hormone, found in Theromyzon tessulatum (Duck leech).